The following is a 205-amino-acid chain: Outer-membrane lipoprotein LolB (205 aa).

An N-terminal signal peptide occupies residues 1–17; sequence MFLRHFIVFSFIALLAG. C18 carries N-palmitoyl cysteine lipidation. Residue C18 is the site of S-diacylglycerol cysteine attachment.

It belongs to the LolB family. As to quaternary structure, monomer.

It localises to the cell outer membrane. Plays a critical role in the incorporation of lipoproteins in the outer membrane after they are released by the LolA protein. The sequence is that of Outer-membrane lipoprotein LolB from Pseudomonas fluorescens (strain ATCC BAA-477 / NRRL B-23932 / Pf-5).